The sequence spans 20 residues: GYSSASKIIFGSGTRLSIRP.

Alpha-beta TR is a heterodimer composed of an alpha and beta chain; disulfide-linked. The alpha-beta TR is associated with the transmembrane signaling CD3 coreceptor proteins to form the TR-CD3 (TcR or TCR). The assembly of alpha-beta TR heterodimers with CD3 occurs in the endoplasmic reticulum where a single alpha-beta TR heterodimer associates with one CD3D-CD3E heterodimer, one CD3G-CD3E heterodimer and one CD247 homodimer forming a stable octameric structure. CD3D-CD3E and CD3G-CD3E heterodimers preferentially associate with TR alpha and TR beta chains, respectively. The association of the CD247 homodimer is the last step of TcR assembly in the endoplasmic reticulum and is required for transport to the cell surface.

The protein localises to the cell membrane. Its function is as follows. J region of the variable domain of T cell receptor (TR) alpha chain that participates in the antigen recognition. Alpha-beta T cell receptors are antigen specific receptors which are essential to the immune response and are present on the cell surface of T lymphocytes. Recognize peptide-major histocompatibility (MH) (pMH) complexes that are displayed by antigen presenting cells (APC), a prerequisite for efficient T cell adaptive immunity against pathogens. Binding of alpha-beta TR to pMH complex initiates TR-CD3 clustering on the cell surface and intracellular activation of LCK that phosphorylates the ITAM motifs of CD3G, CD3D, CD3E and CD247 enabling the recruitment of ZAP70. In turn ZAP70 phosphorylates LAT, which recruits numerous signaling molecules to form the LAT signalosome. The LAT signalosome propagates signal branching to three major signaling pathways, the calcium, the mitogen-activated protein kinase (MAPK) kinase and the nuclear factor NF-kappa-B (NF-kB) pathways, leading to the mobilization of transcription factors that are critical for gene expression and essential for T cell growth and differentiation. The T cell repertoire is generated in the thymus, by V-(D)-J rearrangement. This repertoire is then shaped by intrathymic selection events to generate a peripheral T cell pool of self-MH restricted, non-autoaggressive T cells. Post-thymic interaction of alpha-beta TR with the pMH complexes shapes TR structural and functional avidity. The chain is T cell receptor alpha joining 3 from Homo sapiens (Human).